Here is a 123-residue protein sequence, read N- to C-terminus: Large ribosomal subunit protein uL24 (123 aa).

It belongs to the universal ribosomal protein uL24 family. Part of the 50S ribosomal subunit.

One of two assembly initiator proteins, it binds directly to the 5'-end of the 23S rRNA, where it nucleates assembly of the 50S subunit. Functionally, located at the polypeptide exit tunnel on the outside of the subunit. In Pyrobaculum islandicum (strain DSM 4184 / JCM 9189 / GEO3), this protein is Large ribosomal subunit protein uL24.